The following is a 537-amino-acid chain: MTSNTLHYTVEKSSILGPEWQSLYSTAEPVDFDKSHFEQAMLNVIRQPNVNSTVILRADMLIDNEYDLESGSCVKSEKKDIALGSDEGILKVNIDDLAPRSVPIALADVTTKFQFVRRIVPRNPFKDAIINQTCLVMNSNSDASTSLVIYIPHFDNAELCPFYIPQVAAVGILLHDHQLSVHYIPFAGQKELLFDPKQRVVRTAFRLLQTAYKHSKGVKDGYAKRVMHDVVVDKVLFQDQYIHLKKKYSKFLVDNWAESTDPKKHVFEDIAIAAFLIELWKKIYGAENTTNKMQFRDLGCGNGVLCYILIQEGFKGLGIDARQRKSWSIYPAEVKRCLKEQVIIPSVLLRPHPTMKLHAPHLQHNGRFFPMQLVSPQLIAPATVMYSSADLLQSPQVNIAEFPPDTFIIGNHSDELTCWIPLLGYPFMVIPCCSHNLSGNRIRYAVRDVERAKKLGNSTYQGLVDRVEYLADRVGWKTEKEMLRIPSTRNAAIIGYKNDKLNEFPTDEIYSILMEEGGADGWVANTMNLMKSNPRGH.

Belongs to the TRM44 family.

It is found in the cytoplasm. The enzyme catalyses uridine(44) in tRNA(Ser) + S-adenosyl-L-methionine = 2'-O-methyluridine(44) in tRNA(Ser) + S-adenosyl-L-homocysteine + H(+). In terms of biological role, probable adenosyl-L-methionine (AdoMet)-dependent tRNA (uracil-O(2)-)-methyltransferase. In Kluyveromyces lactis (strain ATCC 8585 / CBS 2359 / DSM 70799 / NBRC 1267 / NRRL Y-1140 / WM37) (Yeast), this protein is tRNA (uracil-O(2)-)-methyltransferase (TRM44).